The sequence spans 339 residues: DNA-directed RNA polymerase subunit alpha (339 aa).

The alpha N-terminal domain (alpha-NTD) stretch occupies residues 1 to 233 (MVREEIAVAT…DLFIPFLHAE (233 aa)). Residues 267 to 339 (KKMALKSIFI…FGFDLPKNGK (73 aa)) form an alpha C-terminal domain (alpha-CTD) region.

This sequence belongs to the RNA polymerase alpha chain family. In plastids the minimal PEP RNA polymerase catalytic core is composed of four subunits: alpha, beta, beta', and beta''. When a (nuclear-encoded) sigma factor is associated with the core the holoenzyme is formed, which can initiate transcription.

The protein resides in the plastid. Its subcellular location is the chloroplast. It carries out the reaction RNA(n) + a ribonucleoside 5'-triphosphate = RNA(n+1) + diphosphate. Functionally, DNA-dependent RNA polymerase catalyzes the transcription of DNA into RNA using the four ribonucleoside triphosphates as substrates. The polypeptide is DNA-directed RNA polymerase subunit alpha (Piper cenocladum (Ant piper)).